A 495-amino-acid chain; its full sequence is MEPVVRLRGVSKEFPGVVAVDGVDLDILPGEVHVVAGENGAGKSTLMKLLSQVERPTSGEIYISGERVEFHGPGHARRLGVAMVYQEFALAPHLSVAENLFLGREPGRGGFVNRRAEKEEARGLLRRVGLEVDPDRLVSSLTVAEQQRVEIAKALAIDARVVIMDEPTATLAEKEIEELFEVIRDLTSHGRAVLYISHRLDEIFRIADRVTVMRDGKVVATLPVEELDEAKLVRLMVGREIGNLYPKPEAEIGEVLLRVRGLSRGERLKDCSFEVRAGEILGFAGLVGAGRTELARAVFGADPVDSGEIELEGRPLRIRKPQDAIEAGIGYLTEDRKGEGLALQLGIDQNITLASLPARLGFIGLGRERSIAERRREQLNIRTPSVRRKVQVLSGGNQQKVVVARWLETRARVLFFDEPARGIDVGAKAEMFALIGELAREGRGIVLISSYLPELINMCDRILVMRDGRVAGVLEREEFSEEGIIALATGVKETV.

ABC transporter domains lie at 5 to 240 (VRLR…VGRE) and 250 to 492 (AEIG…TGVK). ATP is bound at residue 37–44 (GENGAGKS).

The protein belongs to the ABC transporter superfamily. Ribose importer (TC 3.A.1.2.1) family. The complex is composed of an ATP-binding protein (RbsA), two transmembrane proteins (RbsC) and a solute-binding protein (RbsB).

It localises to the cell membrane. The catalysed reaction is D-ribose(out) + ATP + H2O = D-ribose(in) + ADP + phosphate + H(+). Part of the ABC transporter complex RbsABC involved in ribose import. Responsible for energy coupling to the transport system. This Rubrobacter xylanophilus (strain DSM 9941 / JCM 11954 / NBRC 16129 / PRD-1) protein is Ribose import ATP-binding protein RbsA 3.